We begin with the raw amino-acid sequence, 142 residues long: Glia maturation factor beta (142 aa).

Residue S2 is modified to N-acetylserine. Positions S4–G139 constitute an ADF-H domain.

The protein belongs to the actin-binding proteins ADF family. GMF subfamily. In terms of processing, phosphorylated; stimulated by phorbol ester.

Functionally, this protein causes differentiation of brain cells, stimulation of neural regeneration, and inhibition of proliferation of tumor cells. The chain is Glia maturation factor beta (Gmfb) from Rattus norvegicus (Rat).